The following is a 202-amino-acid chain: Uclacyanin-2 (202 aa).

A signal peptide spans 1–29 (MAMNGLSKMAVAAATALLLVLTIVPGAVA). One can recognise a Phytocyanin domain in the interval 30 to 126 (VTYTIEWTTG…GMKLAVNVVA (97 aa)). Residue histidine 65 participates in Cu cation binding. Residue asparagine 86 is glycosylated (N-linked (GlcNAc...) asparagine). 3 residues coordinate Cu cation: cysteine 106, histidine 111, and methionine 118. The disordered stretch occupies residues 129–181 (AGPPATPTPPSSTPGTPTTPESPPSGGSPTPTTPTPGAGSTSPPPPPKASGAS). The span at 141–169 (TPGTPTTPESPPSGGSPTPTTPTPGAGST) shows a compositional bias: low complexity. A lipid anchor (GPI-anchor amidated serine) is attached at serine 178. The propeptide at 179 to 202 (GASKGVMSYVLVGVSMVLGYGLWM) is removed in mature form.

The protein localises to the cell membrane. Its function is as follows. Probably acts as an electron carrier involved in oxygen activation and/or lignin formation. In Arabidopsis thaliana (Mouse-ear cress), this protein is Uclacyanin-2.